We begin with the raw amino-acid sequence, 1110 residues long: Guanylate cyclase 2D (1110 aa).

A signal peptide spans 1–66 (MAGLQQGCHP…ADSLSLPAWA (66 aa)). Residues 67-475 (RETFTLGVLG…PNTLCIRGVQ (409 aa)) lie on the Extracellular side of the membrane. The cysteines at positions 121 and 149 are disulfide-linked. Residues Asn304 and Asn374 are each glycosylated (N-linked (GlcNAc...) asparagine). Residues 476-500 (PLGSLLTLTITCVLALVGGFLAYFI) traverse the membrane as a helical segment. Residues 501 to 1110 (RLGLQQLRLL…TGFAKLARVG (610 aa)) lie on the Cytoplasmic side of the membrane. The interval 529-556 (TPSRRRPHVDSGSESRSVVDGGSPQSVI) is disordered. The region spanning 541–818 (SESRSVVDGG…PSLDQIYTQF (278 aa)) is the Protein kinase domain. The interaction with NCALD stretch occupies residues 880–921 (MGTTVEPEYFDQVTIYFSDIVGFTTISALSEPIEVVGFLNDL). The 131-residue stretch at 893 to 1023 (TIYFSDIVGF…DTVNTASRME (131 aa)) folds into the Guanylate cyclase domain.

This sequence belongs to the adenylyl cyclase class-4/guanylyl cyclase family. Interacts (via the catalytic domain) with NCALD. In terms of tissue distribution, specifically expressed in a subpopulation of olfactory sensory neurons. Expressed in the cilia of the olfactory epithelium.

It is found in the cell projection. It localises to the cilium membrane. The enzyme catalyses GTP = 3',5'-cyclic GMP + diphosphate. Its activity is regulated as follows. Activated by Ca(2+). Activated by NCALD in a Ca(2+)-dependent fashion. In terms of biological role, functions as an olfactory receptor activated by a urine odorant, uroguanylin. Activated as well by the volatile semiochemicals carbon disulfide (CS2) and carbon dioxide (CO2). Has guanylate cyclase activity upon binding of the ligand. Activation of GUCY2D neurons leads to the cGMP-dependent activation of the CNGA3 channels, membrane depolarization and an increase in action potential frequency. Signaling pathways activated by GUCY2D may trigger social behaviors such as acquisition of food preference. The protein is Guanylate cyclase 2D (Gucy2d) of Rattus norvegicus (Rat).